Consider the following 509-residue polypeptide: Ribonuclease Y (509 aa).

Residues 3-23 form a helical membrane-spanning segment; sequence IIFSSIFAGFILGFLIRVFLG. One can recognise a KH domain in the interval 197 to 257; it reads TVASVELPND…IRKELAKRTL (61 aa). The 96-residue stretch at 323–418 folds into the HD domain; the sequence is VLSHSKETAI…VQIADAISAS (96 aa).

The protein belongs to the RNase Y family.

The protein localises to the cell membrane. Endoribonuclease that initiates mRNA decay. This Borreliella afzelii (strain PKo) (Borrelia afzelii) protein is Ribonuclease Y.